Here is a 164-residue protein sequence, read N- to C-terminus: uncharacterized protein (164 aa).

Positions 1-17 are enriched in polar residues; the sequence is MNSRVPATQSWFSSHLP. The segment at 1–48 is disordered; the sequence is MNSRVPATQSWFSSHLPTTEPDLEPATAAEGSTTETATLSPETTSFND. Positions 24-45 are enriched in low complexity; sequence EPATAAEGSTTETATLSPETTS. The helical transmembrane segment at 64 to 84 threads the bilayer; that stretch reads MLLSFGIITVIGLAVAMVLYI. The stretch at 106 to 130 forms a coiled coil; sequence TEEQDELEQELLEHGRDAASMQAAA.

The protein resides in the membrane. This is an uncharacterized protein from Mus musculus (Mouse).